We begin with the raw amino-acid sequence, 428 residues long: Putative zinc metalloprotease SAR1238 (428 aa).

H21 provides a ligand contact to Zn(2+). E22 is a catalytic residue. H25 provides a ligand contact to Zn(2+). The next 4 membrane-spanning stretches (helical) occupy residues 172-194 (FLTL…IGLA), 309-331 (GSTY…GFSF), 352-374 (IISL…LIPI), and 401-420 (TTII…LVTW). In terms of domain architecture, PDZ spans 186–269 (ALVLFIGLAY…TKSVELTPKK (84 aa)).

This sequence belongs to the peptidase M50B family. Zn(2+) serves as cofactor.

It localises to the cell membrane. In Staphylococcus aureus (strain MRSA252), this protein is Putative zinc metalloprotease SAR1238.